The sequence spans 207 residues: NADH-quinone oxidoreductase subunit C (207 aa).

The protein belongs to the complex I 30 kDa subunit family. As to quaternary structure, NDH-1 is composed of 14 different subunits. Subunits NuoB, C, D, E, F, and G constitute the peripheral sector of the complex.

It localises to the cell inner membrane. The catalysed reaction is a quinone + NADH + 5 H(+)(in) = a quinol + NAD(+) + 4 H(+)(out). Its function is as follows. NDH-1 shuttles electrons from NADH, via FMN and iron-sulfur (Fe-S) centers, to quinones in the respiratory chain. The immediate electron acceptor for the enzyme in this species is believed to be ubiquinone. Couples the redox reaction to proton translocation (for every two electrons transferred, four hydrogen ions are translocated across the cytoplasmic membrane), and thus conserves the redox energy in a proton gradient. The sequence is that of NADH-quinone oxidoreductase subunit C from Jannaschia sp. (strain CCS1).